We begin with the raw amino-acid sequence, 295 residues long: MLSIESLCKSYRHHEAVKNVSFHVNENECVALLGPNGAGKTTTLQMLAGLLSPTSGTIKLLGEKKLDRRLIGYLPQYPAFYSWMTANEFLTFAGRLSGLSKRKCQEKIGEMLEFVGLHEAAHKRIGGYSGGMKQRLGLAQALLHKPKFLILDEPVSALDPTGRFEVLDMMRELKKHMAVLFSTHVLHDAEQVCDQVVIMKNGEISWKGELQELKQQQQTNVFTLSVKEKLEGWLEEKPYVSAIVYKNPSQAVFELPDIHAGRSLLSDCIRKGLTVTRFEQKTESLEDVYLKVVHA.

The region spanning 2-226 (LSIESLCKSY…QQTNVFTLSV (225 aa)) is the ABC transporter domain. Residue 34-41 (GPNGAGKT) coordinates ATP.

This sequence belongs to the ABC transporter superfamily.

This is an uncharacterized protein from Bacillus subtilis (strain 168).